Consider the following 496-residue polypeptide: Probable cytosol aminopeptidase (496 aa).

Mn(2+) is bound by residues Lys-261 and Asp-266. Lys-273 is a catalytic residue. Positions 284, 343, and 345 each coordinate Mn(2+). Arg-347 is a catalytic residue.

Belongs to the peptidase M17 family. It depends on Mn(2+) as a cofactor.

The protein resides in the cytoplasm. The enzyme catalyses Release of an N-terminal amino acid, Xaa-|-Yaa-, in which Xaa is preferably Leu, but may be other amino acids including Pro although not Arg or Lys, and Yaa may be Pro. Amino acid amides and methyl esters are also readily hydrolyzed, but rates on arylamides are exceedingly low.. The catalysed reaction is Release of an N-terminal amino acid, preferentially leucine, but not glutamic or aspartic acids.. Its function is as follows. Presumably involved in the processing and regular turnover of intracellular proteins. Catalyzes the removal of unsubstituted N-terminal amino acids from various peptides. This is Probable cytosol aminopeptidase from Bacillus pumilus (strain SAFR-032).